Consider the following 580-residue polypeptide: (3S,6E)-nerolidol synthase 1, chloroplastic (580 aa).

Residues 1 to 31 (MASSSWAFFKVFNPQIAPKSISHIGQSDLMQ) constitute a chloroplast transit peptide. Residues Asp-334, Asp-338, Asp-478, Ser-482, and Glu-486 each contribute to the Mg(2+) site. Residues 334–338 (DDIFD) carry the DDXXD motif motif.

The protein belongs to the terpene synthase family. Tpsg subfamily. It depends on Mg(2+) as a cofactor. Mn(2+) serves as cofactor.

The protein resides in the plastid. The protein localises to the chloroplast. The enzyme catalyses (2E,6E)-farnesyl diphosphate + H2O = (3S,6E)-nerolidol + diphosphate. It participates in secondary metabolite biosynthesis; terpenoid biosynthesis. Its function is as follows. Involved in monoterpene (C10) and sesquiterpene (C15) biosynthesis. Converts geranyl diphosphate (GPP) into S-linalool and farnesyl diphosphate (FPP) into (3S)-E-nerolidol. Probably not expressed in wild strawberry species. The protein is (3S,6E)-nerolidol synthase 1, chloroplastic of Fragaria vesca (Woodland strawberry).